Consider the following 391-residue polypeptide: Processive diacylglycerol beta-glucosyltransferase (391 aa).

It belongs to the glycosyltransferase 28 family. UgtP subfamily.

The protein localises to the cell membrane. It catalyses the reaction a 1,2-diacyl-3-O-(beta-D-glucopyranosyl)-sn-glycerol + UDP-alpha-D-glucose = a 1,2-diacyl-3-O-(beta-D-Glc-(1-&gt;6)-beta-D-Glc)-sn-glycerol + UDP + H(+). It carries out the reaction a 1,2-diacyl-sn-glycerol + UDP-alpha-D-glucose = a 1,2-diacyl-3-O-(beta-D-glucopyranosyl)-sn-glycerol + UDP + H(+). It functions in the pathway glycolipid metabolism; diglucosyl-diacylglycerol biosynthesis. Functionally, processive glucosyltransferase involved in the biosynthesis of both the bilayer- and non-bilayer-forming membrane glucolipids. Is able to successively transfer two glucosyl residues to diacylglycerol (DAG), thereby catalyzing the formation of beta-monoglucosyl-DAG (3-O-(beta-D-glucopyranosyl)-1,2-diacyl-sn-glycerol) and beta-diglucosyl-DAG (3-O-(beta-D-glucopyranosyl-beta-(1-&gt;6)-D-glucopyranosyl)-1,2-diacyl-sn-glycerol). Beta-diglucosyl-DAG is the predominant glycolipid found in Bacillales and is also used as a membrane anchor for lipoteichoic acid (LTA). This Staphylococcus saprophyticus subsp. saprophyticus (strain ATCC 15305 / DSM 20229 / NCIMB 8711 / NCTC 7292 / S-41) protein is Processive diacylglycerol beta-glucosyltransferase.